Here is a 72-residue protein sequence, read N- to C-terminus: Prokaryotic ubiquitin-like protein Pup (72 aa).

Residues 1–10 show a composition bias toward gly residues; it reads MATKDTGGGQ. Residues 1–45 form a disordered region; sequence MATKDTGGGQQKATRSTEEVEEQAQDAQASEDLAERQEKLSDDVD. Positions 10 to 60 form a coiled coil; that stretch reads QQKATRSTEEVEEQAQDAQASEDLAERQEKLSDDVDSVLDEIDDVLEENAE. The segment at 28-66 is ARC ATPase binding; the sequence is QASEDLAERQEKLSDDVDSVLDEIDDVLEENAEDFVRSF. Residues 33–42 are compositionally biased toward basic and acidic residues; that stretch reads LAERQEKLSD. A Deamidated glutamine modification is found at Q72. Q72 participates in a covalent cross-link: Isoglutamyl lysine isopeptide (Gln-Lys) (interchain with K-? in acceptor proteins).

Belongs to the prokaryotic ubiquitin-like protein family. Strongly interacts with the proteasome-associated ATPase ARC through a hydrophobic interface; the interacting region of Pup lies in its C-terminal half. There is one Pup binding site per ARC hexamer ring. Post-translationally, is modified by deamidation of its C-terminal glutamine to glutamate by the deamidase Dop, a prerequisite to the subsequent pupylation process.

Its pathway is protein degradation; proteasomal Pup-dependent pathway. Functionally, protein modifier that is covalently attached to lysine residues of substrate proteins, thereby targeting them for proteasomal degradation. The tagging system is termed pupylation. This Streptomyces griseus subsp. griseus (strain JCM 4626 / CBS 651.72 / NBRC 13350 / KCC S-0626 / ISP 5235) protein is Prokaryotic ubiquitin-like protein Pup.